Consider the following 142-residue polypeptide: Hemoglobin subunit alpha (142 aa).

Residues 2–142 (VLSGEDKSNI…VSTVLTSKYR (141 aa)) form the Globin domain. The residue at position 4 (Ser-4) is a Phosphoserine. An N6-succinyllysine mark is found at Lys-8 and Lys-12. Position 17 is an N6-acetyllysine; alternate (Lys-17). An N6-succinyllysine; alternate modification is found at Lys-17. At Tyr-25 the chain carries Phosphotyrosine. At Ser-36 the chain carries Phosphoserine. Residue Lys-41 is modified to N6-succinyllysine. Phosphoserine is present on Ser-50. His-59 is a binding site for O2. His-88 is a binding site for heme b. Phosphoserine is present on Ser-103. Residue Thr-109 is modified to Phosphothreonine. 3 positions are modified to phosphoserine: Ser-112, Ser-125, and Ser-132. A phosphothreonine mark is found at Thr-135 and Thr-138. The residue at position 139 (Ser-139) is a Phosphoserine.

Belongs to the globin family. In terms of assembly, heterotetramer of two alpha chains and two beta chains. In terms of tissue distribution, red blood cells.

Involved in oxygen transport from the lung to the various peripheral tissues. In terms of biological role, hemopressin acts as an antagonist peptide of the cannabinoid receptor CNR1. Hemopressin-binding efficiently blocks cannabinoid receptor CNR1 and subsequent signaling. The protein is Hemoglobin subunit alpha (Hba) of Mus musculus (Mouse).